The primary structure comprises 939 residues: Trafficking kinesin-binding protein 1 (939 aa).

The HAP1 N-terminal domain maps to 46 to 353 (LEEQLPHYKL…EELKNLRNKT (308 aa)). The stretch at 106 to 354 (KTYNDIDAVT…ELKNLRNKTM (249 aa)) forms a coiled coil. Residues 359–509 (RYHSLGLFPM…SLRRENYLSE (151 aa)) form an interaction with HGS region. Residue Ser444 is glycosylated (O-linked (GlcNAc) serine). A disordered region spans residues 472 to 492 (LGNEDHNKKPGTPGTPGSHDL). Residues 490 to 524 (HDLETALRRLSLRRENYLSERRFFEEEQERKLREL) are a coiled coil. Ser534 carries the post-translational modification Phosphoserine. The tract at residues 655 to 669 (PGKCMSQTNSTFTFT) is interaction with OGT. O-linked (GlcNAc) serine glycans are attached at residues Ser677 and Ser716. Residues Ser716 and Ser905 each carry the phosphoserine modification.

Belongs to the milton family. In terms of assembly, interacts with RHOT1 and RHOT2. Found in a complex with KIF5B, OGT, RHOT1 and RHOT2. Interacts with HGS. Interacts with GABRA1. Interacts with KIF5C. Interacts with OGT; stable interaction is not required for glycosylation of this protein by OGT. Isoform 1 interacts with OGT. In terms of processing, O-glycosylated. Glycosylated by OGT; glycosylation in response to increased extracellular glucose levels is required for and leads to regulation of mitochondrial motility by OGT. Widely expressed with the greatest expression in brain, liver and kidney. Detected throughout the CNS, including the cortex, hippocamps, thalamus and various subcortical nuclei of the forebrain and midbrain, the granule of Purkinje layers of the cerebellum and the gray matter of the spinal cord. High level detected in lower moter neurons (at protein level).

The protein localises to the cytoplasm. It is found in the nucleus. Its subcellular location is the mitochondrion. It localises to the early endosome. The protein resides in the endosome. The protein localises to the mitochondrion membrane. It is found in the cell cortex. In terms of biological role, involved in the regulation of endosome-to-lysosome trafficking, including endocytic trafficking of EGF-EGFR complexes and GABA-A receptors. Involved in mitochondrial motility. When O-glycosylated, abolishes mitochondrial motility. Crucial for recruiting OGT to the mitochondrial surface of neuronal processes. TRAK1 and RHOT form an essential protein complex that links KIF5 to mitochondria for light chain-independent, anterograde transport of mitochondria. The chain is Trafficking kinesin-binding protein 1 (Trak1) from Mus musculus (Mouse).